An 872-amino-acid polypeptide reads, in one-letter code: Protein SCD5 (872 aa).

Disordered regions lie at residues 1-98 (MSFD…SGGD) and 209-239 (PKPR…TGDQ). The span at 48 to 85 (FWDQGSRSHSDTTLSYRNNHSNTAADNATNVSSPQKDN) shows a compositional bias: polar residues. A KKRVK motif; Required for interaction with GLC7, endocytosis and actin cytoskeleton organization motif is present at residues 272-276 (KKVRF). Disordered stretches follow at residues 280–321 (ITFQ…LDFT) and 338–358 (SGLV…KKVL). Polar residues-rich tracts occupy residues 284 to 296 (DPPN…SNNS) and 339 to 348 (GLVSSLPSEQ). Tandem repeats lie at residues 405 to 424 (QLPL…HLVR), 439 to 458 (QTGL…YLMR), 479 to 498 (SGGL…YLMK), 534 to 545 (SPNITLPQSNQQ), 564 to 575 (SPQHTYSNNVRI), 593 to 604 (PPQNTLPQHQQS), 608 to 619 (SPQNTIPQHQRS), 623 to 634 (SPQNTFTQNQPI), 636 to 647 (SPQHTYSNNQAT), 650 to 661 (SPQNTYTNNQQQ), 683 to 694 (PPQHMYSNVQKQ), and 717 to 728 (SPQNAANSYFQS). A 3 X 20 AA approximate repeats region spans residues 405 to 448 (QLPLEPLKPTATGSANHLVREEYNQGLHPSNGAIQTGLQPLKPT). Residues T416 and T450 each carry the phosphothreonine; by PRK1 modification. The segment at 460–489 (HMEQPQSIKPSSTPETVTNSGGLQPLKPTA) is disordered. The segment covering 462–481 (EQPQSIKPSSTPETVTNSGG) has biased composition (polar residues). T490 is modified (phosphothreonine; by PRK1). 2 disordered regions span residues 516–571 (QFTN…TYSN) and 591–620 (AFPP…QRSQ). Residues 534 to 728 (SPNITLPQSN…QNAANSYFQS (195 aa)) form a 9 X 12 AA approximate repeats region. Residue S564 is modified to Phosphoserine. Positions 594–620 (PQNTLPQHQQSHLLSPQNTIPQHQRSQ) are enriched in polar residues. The disordered stretch occupies residues 649–681 (ISPQNTYTNNQQQPQHLPPPPPPRAQQQQQGAI). Residues 651-663 (PQNTYTNNQQQPQ) show a composition bias toward low complexity. The span at 697–727 (LVPTQPSYTNSPSIQSPNFLSPQNAANSYFQ) shows a compositional bias: polar residues. 2 disordered regions span residues 697-758 (LVPT…ISSF) and 806-838 (NSDI…QFPF). A compositionally biased stretch (low complexity) spans 728–745 (SLLSSSPSPNPTPSNAST). Composition is skewed to polar residues over residues 746–758 (VNGN…ISSF) and 806–815 (NSDIHSQPNK). Positions 823–835 (QQVHQQQQQQQQQ) are enriched in low complexity.

As to quaternary structure, interacts (via KKVRF motif) with phosphatase GLC7. In terms of processing, phosphorylation by PRK1 and/or AKL1 on Thr-416, Thr-450 and Thr-490 of repeats 1-1, 1-2 and/or 1-3 negatively regulates SCD5 function in endocytosis and actin cytoskeleton organization.

It is found in the membrane. In terms of biological role, regulates both fluid phase and receptor-mediated endocytosis. Involved in vesicular transport at a late stage of the secretory pathway. Regulates actin cytoskeleton organization. This Saccharomyces cerevisiae (strain ATCC 204508 / S288c) (Baker's yeast) protein is Protein SCD5 (SCD5).